A 308-amino-acid polypeptide reads, in one-letter code: Testis-expressed protein 52 (308 aa).

Expressed in Testis.

This chain is Testis-expressed protein 52, found in Mus musculus (Mouse).